The following is a 223-amino-acid chain: UPF0502 protein Sbal223_2520 (223 aa).

This sequence belongs to the UPF0502 family.

This Shewanella baltica (strain OS223) protein is UPF0502 protein Sbal223_2520.